Here is a 719-residue protein sequence, read N- to C-terminus: MIVTFLLEIGTEELPANFVYEAIQQWQELIPMTLKEAFLTNDSVNVYATPRRLAVVIDALPTKQPDREEEIKGPPAKAAFKDGKPTKAAEGFSKKQGVQLNDLQICTTEKGDFVFVNKKIQGKPTAAILTELIPKWIDKLEGKRFMRWADGELKFPRPIRWLVALLDDEILPINLDNGSQKITSDRFSYGHRVLHPKLIEISQAKNYVEVLKKAYIEVDYKQRKSKIEQQIKTAAEEIKGKAEISEELLAEVTNLVEWPTVVIGKFDEEFLILPGEVTTTVMETHQRYFPVFKSTKTFKDMELLPYFITISNGDPEKSEIIAIGNERVIKARLADGQFFYKTDLAKPLESYLPELETVTFQAKLGSMREKVKRIVSIAKLIAGQLQITQEESKNIERAALLCKADLVTQMVYEFPELQGVMGEKYARAAGETEAVATAIFEHYLPRGAGDILPKTISGQVISLADRLDTLVSIFGLGMLPTGSADPFALRRAANGVVNISWSANLPLNLHQLLEEIATNFFKTYSQTNSDLLAQLSNFLLQRIKTILLEEKNIDYDLVNAVLGDNDAEYKERGLKDLLDVRNRAIFLQNIRQNGMLGKIYETINRSTRLAAQGELDKIQLKPLKVIDSKLFKSESELAFYNALVELVPQTEISQKTRNYQQLVDALLKIAPTVSNFFDGPDSVLVIDPDPKIKKNRLNLLGLLRNNARVLADFGQIVKN.

The segment at 65–84 (PDREEEIKGPPAKAAFKDGK) is disordered.

Belongs to the class-II aminoacyl-tRNA synthetase family. In terms of assembly, tetramer of two alpha and two beta subunits.

The protein localises to the cytoplasm. The enzyme catalyses tRNA(Gly) + glycine + ATP = glycyl-tRNA(Gly) + AMP + diphosphate. This chain is Glycine--tRNA ligase beta subunit, found in Trichodesmium erythraeum (strain IMS101).